A 402-amino-acid chain; its full sequence is Tyrosine--tRNA ligase (402 aa).

The short motif at 48–57 is the 'HIGH' region element; it reads PSRPDLHLGH. Residues 232-236 carry the 'KMSKS' region motif; it reads KMSKS. Lys-235 contacts ATP. In terms of domain architecture, S4 RNA-binding spans 339–402; sequence MPIIDLLTLL…KRKFFKIRSK (64 aa).

This sequence belongs to the class-I aminoacyl-tRNA synthetase family. TyrS type 2 subfamily. In terms of assembly, homodimer.

The protein resides in the cytoplasm. The catalysed reaction is tRNA(Tyr) + L-tyrosine + ATP = L-tyrosyl-tRNA(Tyr) + AMP + diphosphate + H(+). Functionally, catalyzes the attachment of tyrosine to tRNA(Tyr) in a two-step reaction: tyrosine is first activated by ATP to form Tyr-AMP and then transferred to the acceptor end of tRNA(Tyr). In Chlorobium chlorochromatii (strain CaD3), this protein is Tyrosine--tRNA ligase.